The sequence spans 207 residues: Large ribosomal subunit protein uL4 (207 aa).

Positions 48 to 86 (THKVKNRSEVRGGGRKPWRQKGTGRARQGSIRSPQWRGG) are disordered. Positions 60-71 (GGRKPWRQKGTG) are enriched in basic residues.

The protein belongs to the universal ribosomal protein uL4 family. As to quaternary structure, part of the 50S ribosomal subunit.

Functionally, one of the primary rRNA binding proteins, this protein initially binds near the 5'-end of the 23S rRNA. It is important during the early stages of 50S assembly. It makes multiple contacts with different domains of the 23S rRNA in the assembled 50S subunit and ribosome. Its function is as follows. Forms part of the polypeptide exit tunnel. This chain is Large ribosomal subunit protein uL4, found in Bacillus licheniformis (strain ATCC 14580 / DSM 13 / JCM 2505 / CCUG 7422 / NBRC 12200 / NCIMB 9375 / NCTC 10341 / NRRL NRS-1264 / Gibson 46).